A 399-amino-acid chain; its full sequence is Cytohesin-3 (399 aa).

Residues 14–61 (EDLSLEEREELLDIRRRKKELIDDIERLKYEIAEVMTEIDNLTSVEES) adopt a coiled-coil conformation. The SEC7 domain maps to 77–206 (FNMDPKKGIQ…IIMLNTSLHN (130 aa)). The 117-residue stretch at 264–380 (NPDREGWLLK…WMKSIKASIS (117 aa)) folds into the PH domain. A 1,2-diacyl-sn-glycero-3-phospho-(1D-myo-inositol-3,4,5-trisphosphate)-binding positions include 273 to 280 (KLGGRVKT), arginine 284, tyrosine 295, arginine 305, and asparagine 354. Positions 391 to 399 (RKRRIANKK) are C-terminal autoinhibitory region.

Interacts with TAMALIN. Interacts with FRMD4A. Interacts with FRMD4B.

The protein localises to the cytoplasm. It is found in the cytosol. Its subcellular location is the cell membrane. The protein resides in the cell junction. It localises to the adherens junction. The protein localises to the tight junction. In terms of biological role, promotes guanine-nucleotide exchange on ARF1. Promotes the activation of ARF factors through replacement of GDP with GTP. Plays a role in the epithelial polarization. The chain is Cytohesin-3 (Cyth3) from Mus musculus (Mouse).